Reading from the N-terminus, the 276-residue chain is Ribosomal RNA small subunit methyltransferase A (276 aa).

Asn28, Leu30, Gly55, Glu77, Asp103, and Asn124 together coordinate S-adenosyl-L-methionine.

This sequence belongs to the class I-like SAM-binding methyltransferase superfamily. rRNA adenine N(6)-methyltransferase family. RsmA subfamily.

Its subcellular location is the cytoplasm. It carries out the reaction adenosine(1518)/adenosine(1519) in 16S rRNA + 4 S-adenosyl-L-methionine = N(6)-dimethyladenosine(1518)/N(6)-dimethyladenosine(1519) in 16S rRNA + 4 S-adenosyl-L-homocysteine + 4 H(+). Functionally, specifically dimethylates two adjacent adenosines (A1518 and A1519) in the loop of a conserved hairpin near the 3'-end of 16S rRNA in the 30S particle. May play a critical role in biogenesis of 30S subunits. This Agrobacterium fabrum (strain C58 / ATCC 33970) (Agrobacterium tumefaciens (strain C58)) protein is Ribosomal RNA small subunit methyltransferase A.